The chain runs to 351 residues: MHQSLTQQRSSDMSLPDSMGAFNRRKRNSIYVTVTLLIVSMLILTVGLAATTRTQNVTVGGYYPGVILGFGSFLGIIGSNLIENKRQMLVASIVFISFGVIAAFCCAIVDGVFAARHIDLKPLYANRCHYVPKTSQREAEEVITSSSKITPSTRALRNLTQAVKEVNCPQLSRGLCTPRIRGNTCFCCDLYNCGNRVEITGGYYEYIDVSSCQDIIHLYHLLWSATILNIVGLFLGIITAAVLGGFKDMNPTLPALNCSVENAHPTVSYYARPQVASYNTYYHSPPHLPPYSAYDFQHSGVFPSSPPSGLSDEQEPQSPSPSPSYMWSSSAPPRYSPPYYPPFEKPPPYSP.

The next 4 helical transmembrane spans lie at Ile-30–Ala-50, Val-57–Ile-77, Leu-89–Val-109, and Thr-226–Phe-246. Residues Phe-302–Ala-331 are disordered.

The protein belongs to the TMEM255 family.

Its subcellular location is the membrane. The protein is Transmembrane protein 255A (Tmem255a) of Mus musculus (Mouse).